Here is a 308-residue protein sequence, read N- to C-terminus: Tetraacyldisaccharide 4'-kinase (308 aa).

ATP is bound at residue 63–70 (SFGGNGKT).

The protein belongs to the LpxK family.

It carries out the reaction a lipid A disaccharide + ATP = a lipid IVA + ADP + H(+). The protein operates within glycolipid biosynthesis; lipid IV(A) biosynthesis; lipid IV(A) from (3R)-3-hydroxytetradecanoyl-[acyl-carrier-protein] and UDP-N-acetyl-alpha-D-glucosamine: step 6/6. In terms of biological role, transfers the gamma-phosphate of ATP to the 4'-position of a tetraacyldisaccharide 1-phosphate intermediate (termed DS-1-P) to form tetraacyldisaccharide 1,4'-bis-phosphate (lipid IVA). The polypeptide is Tetraacyldisaccharide 4'-kinase (Campylobacter jejuni subsp. jejuni serotype O:2 (strain ATCC 700819 / NCTC 11168)).